The chain runs to 203 residues: Small ribosomal subunit protein uS4 (203 aa).

One can recognise an S4 RNA-binding domain in the interval 93–156 (RRLDNVVYRL…MKVPAILEAV (64 aa)).

The protein belongs to the universal ribosomal protein uS4 family. As to quaternary structure, part of the 30S ribosomal subunit. Contacts protein S5. The interaction surface between S4 and S5 is involved in control of translational fidelity.

Functionally, one of the primary rRNA binding proteins, it binds directly to 16S rRNA where it nucleates assembly of the body of the 30S subunit. Its function is as follows. With S5 and S12 plays an important role in translational accuracy. In Streptococcus pyogenes serotype M1, this protein is Small ribosomal subunit protein uS4.